The chain runs to 140 residues: Large ribosomal subunit protein bL17 (140 aa).

This sequence belongs to the bacterial ribosomal protein bL17 family. As to quaternary structure, part of the 50S ribosomal subunit. Contacts protein L32.

The protein is Large ribosomal subunit protein bL17 of Hyphomonas neptunium (strain ATCC 15444).